The primary structure comprises 377 residues: Apelin receptor (377 aa).

Residues 1-28 (MEDDGYNYYGADNQSECDYADWTPSGAL) are Extracellular-facing. N13 carries N-linked (GlcNAc...) asparagine glycosylation. Disulfide bonds link C17-C279 and C100-C179. A helical transmembrane segment spans residues 29-52 (IPAIYILVFLLGTTGNGLVLWTVF). Residues 53–62 (WSSREKRRSA) are Cytoplasmic-facing. A helical transmembrane segment spans residues 63–84 (DIFIASLAVADLTFVVTLPLWA). Topologically, residues 85 to 97 (TYTYREFDWPFGT) are extracellular. A helical transmembrane segment spans residues 98-123 (FSCKLSSYLIFVNMYASVFCLTGLSF). Residues 124-144 (DRYLAIVRPVANARLRLRVSG) lie on the Cytoplasmic side of the membrane. The helical transmembrane segment at 145-162 (AVATAVLWVLAALLAVPV) threads the bilayer. Residues 163 to 196 (MVFRSTDIPENSTKTQCYMDYSMVATSNSEWAWE) are Extracellular-facing. N173 carries N-linked (GlcNAc...) asparagine glycosylation. Residues 197–221 (VGLGVSSTAVGFVVPFIIMLTCYFF) traverse the membrane as a helical segment. Topologically, residues 222–244 (IAQTIAGHFRKERIEGLRKRRRL) are cytoplasmic. The chain crosses the membrane as a helical span at residues 245–268 (LSIIVVLVVTFALCWMPYHLVKTL). Residues 269 to 287 (YMLGNLLHWPCDFDSFLMN) lie on the Extracellular side of the membrane. A helical transmembrane segment spans residues 288-310 (VFPYCTCISYVNSCLNPFLYAFF). Over 311-377 (DPRFRRACTS…IPYSQETLVD (67 aa)) the chain is Cytoplasmic. Residues 335-349 (SSSAEKSASYSSGHS) show a composition bias toward low complexity. Residues 335-377 (SSSAEKSASYSSGHSQGPGPNMCKGGEPMHEKSIPYSQETLVD) form a disordered region.

This sequence belongs to the G-protein coupled receptor 1 family. In terms of assembly, homodimer; dimerization inhibits APLNR-mediated G protein and beta-arrestin signaling pathways compared to monomeric APLNR. As to expression, widely expressed. Highest expression in the lung, lower in the heart, placenta, ovary, skeletal muscle, mammary gland, kidney and several structures in the brain as the hypothalamus (supraoptic and periventricular nuclei), pituitary, olfactory bulb and pineal gland.

It localises to the cell membrane. In terms of biological role, g protein-coupled receptor for peptide hormones apelin (APLN) and apelin receptor early endogenous ligand (APELA/ELA), that plays a role in the regulation of normal cardiovascular function and fluid homeostasis. When acting as apelin receptor, activates both G(i) protein pathway that inhibits adenylate cyclase activity, and the beta-arrestin pathway that promotes internalization of the receptor. APLNR/APJ also functions as mechanoreceptor that is activated by pathological stimuli in a G-protein-independent fashion to induce beta-arrestin signaling, hence eliciting cardiac hypertrophy. However, the presence of apelin ligand blunts cardiac hypertrophic induction from APLNR/APJ on response to pathological stimuli. Plays a key role in early development such as gastrulation, blood vessels formation and heart morphogenesis by acting as a APELA receptor. May promote angioblast migration toward the embryonic midline, i.e. the position of the future vessel formation, during vasculogenesis. Promotes sinus venosus (SV)-derived endothelial cells migration into the developing heart to promote coronary blood vessel development. Also plays a role in various processes in adults such as regulation of blood vessel formation, blood pressure, heart contractility and heart failure. In Rattus norvegicus (Rat), this protein is Apelin receptor.